Here is a 71-residue protein sequence, read N- to C-terminus: uncharacterized protein (71 aa).

The tract at residues 1-20 (MQKLNKHLKKKKQKRKKMKK) is disordered.

This is an uncharacterized protein from Methanocaldococcus jannaschii (strain ATCC 43067 / DSM 2661 / JAL-1 / JCM 10045 / NBRC 100440) (Methanococcus jannaschii).